The chain runs to 465 residues: Glutamyl-tRNA reductase 2 (465 aa).

Substrate-binding positions include 62–65 (TCNR), serine 122, 127–129 (EGQ), and glutamine 133. Cysteine 63 serves as the catalytic Nucleophile. 204–209 (GAGKMG) is an NADP(+) binding site.

The protein belongs to the glutamyl-tRNA reductase family.

It localises to the plastid. It is found in the chloroplast. The catalysed reaction is (S)-4-amino-5-oxopentanoate + tRNA(Glu) + NADP(+) = L-glutamyl-tRNA(Glu) + NADPH + H(+). It participates in porphyrin-containing compound metabolism; protoporphyrin-IX biosynthesis; 5-aminolevulinate from L-glutamyl-tRNA(Glu): step 1/2. Its function is as follows. Catalyzes the NADPH-dependent reduction of glutamyl-tRNA(Glu) to glutamate 1-semialdehyde (GSA). This is Glutamyl-tRNA reductase 2 (HEMA2) from Hordeum vulgare (Barley).